The following is a 349-amino-acid chain: Protein MULTIPLE CHLOROPLAST DIVISION SITE 1 (349 aa).

The transit peptide at 1 to 52 (MASIDSLQFHSLCNLQSSIGRAKLQNPSSLVIFRRRPVNLNWVQFETKGSFV) directs the protein to the chloroplast. Residues 53–116 (CKAIGDSSTP…VVFLMKKCSV (64 aa)) lie on the Chloroplast intermembrane side of the membrane. The helical transmembrane segment at 117-139 (NSIWIGVCITATVLVAAIRAYVV) threads the bilayer. Over 140–349 (RKSRDNQRAG…NSSSEETHKS (210 aa)) the chain is Stromal. Residues 315–349 (QRPYKFSAKLEGENIQKNSQENHTGNSSSEETHKS) form a disordered region. The span at 329–343 (IQKNSQENHTGNSSS) shows a compositional bias: polar residues.

In terms of assembly, interacts with MIND1. Interacts with ARC6 in the chloroplast stroma and binds to FtsZ2-1 in an ARC6-dependent manner.

The protein localises to the plastid. It localises to the chloroplast inner membrane. Functionally, required for chloroplast division. Together with MIND1 and ARC3, regulates FtsZ ring positioning in chloroplasts in an ARC6-dependent manner. Determines the site of chloroplast division in concert with MIND1. Not directly involved in ring formation, but required for MIND1 and MINE1 localization to regulate FtsZ ring formation during plastidial constriction. The sequence is that of Protein MULTIPLE CHLOROPLAST DIVISION SITE 1 from Arabidopsis thaliana (Mouse-ear cress).